Consider the following 419-residue polypeptide: Tyrosine--tRNA ligase (419 aa).

Residue Tyr-34 coordinates L-tyrosine. Residues Pro-39–Asn-48 carry the 'HIGH' region motif. Residues Tyr-169 and Gln-173 each contribute to the L-tyrosine site. Positions Lys-230–Thr-234 match the 'KMSKS' region motif. Lys-233 is an ATP binding site. One can recognise an S4 RNA-binding domain in the interval Val-352–Ala-419.

Belongs to the class-I aminoacyl-tRNA synthetase family. TyrS type 1 subfamily. As to quaternary structure, homodimer.

It localises to the cytoplasm. The catalysed reaction is tRNA(Tyr) + L-tyrosine + ATP = L-tyrosyl-tRNA(Tyr) + AMP + diphosphate + H(+). Its function is as follows. Catalyzes the attachment of tyrosine to tRNA(Tyr) in a two-step reaction: tyrosine is first activated by ATP to form Tyr-AMP and then transferred to the acceptor end of tRNA(Tyr). This is Tyrosine--tRNA ligase from Bacillus caldotenax.